The following is a 154-amino-acid chain: MLKEFKEFALKGNVMDLAVGVVIGGAFGKIVTSLVNDIITPLIGLLLGKVDFSGLFINLSGVPYKTIAEAKTAHAATLNYGLFLNSVIDFVIIAFSIFIVIKQLNRFKRKQEVEQAPVTTKECPHCISAIPVKATRCPNCTSMLETKGTALAHE.

The next 3 helical transmembrane spans lie at 14 to 34 (VMDLAVGVVIGGAFGKIVTSL), 38 to 58 (IITPLIGLLLGKVDFSGLFIN), and 81 to 101 (GLFLNSVIDFVIIAFSIFIVI).

This sequence belongs to the MscL family. Homopentamer.

It is found in the cell membrane. Functionally, channel that opens in response to stretch forces in the membrane lipid bilayer. May participate in the regulation of osmotic pressure changes within the cell. The sequence is that of Large-conductance mechanosensitive channel from Brevibacillus brevis (strain 47 / JCM 6285 / NBRC 100599).